The following is a 65-amino-acid chain: Large ribosomal subunit protein bL35 (65 aa).

The interval 1 to 26 is disordered; the sequence is MPKIKTVRGAAKRFKKTASGGFKRKQ. A compositionally biased stretch (basic residues) spans 10-26; the sequence is AAKRFKKTASGGFKRKQ.

This sequence belongs to the bacterial ribosomal protein bL35 family.

The sequence is that of Large ribosomal subunit protein bL35 from Actinobacillus pleuropneumoniae serotype 7 (strain AP76).